Here is a 458-residue protein sequence, read N- to C-terminus: Light-independent protochlorophyllide reductase subunit N (458 aa).

Positions 22, 47, and 107 each coordinate [4Fe-4S] cluster.

It belongs to the BchN/ChlN family. As to quaternary structure, protochlorophyllide reductase is composed of three subunits; ChlL, ChlN and ChlB. Forms a heterotetramer of two ChlB and two ChlN subunits. [4Fe-4S] cluster serves as cofactor.

It is found in the plastid. It localises to the chloroplast. It catalyses the reaction chlorophyllide a + oxidized 2[4Fe-4S]-[ferredoxin] + 2 ADP + 2 phosphate = protochlorophyllide a + reduced 2[4Fe-4S]-[ferredoxin] + 2 ATP + 2 H2O. Its pathway is porphyrin-containing compound metabolism; chlorophyll biosynthesis (light-independent). Its function is as follows. Component of the dark-operative protochlorophyllide reductase (DPOR) that uses Mg-ATP and reduced ferredoxin to reduce ring D of protochlorophyllide (Pchlide) to form chlorophyllide a (Chlide). This reaction is light-independent. The NB-protein (ChlN-ChlB) is the catalytic component of the complex. The sequence is that of Light-independent protochlorophyllide reductase subunit N from Chaetosphaeridium globosum (Charophycean green alga).